We begin with the raw amino-acid sequence, 226 residues long: 7-cyano-7-deazaguanine synthase (226 aa).

Ile8–Leu18 is a binding site for ATP. Residues Cys188, Cys198, Cys201, and Cys204 each contribute to the Zn(2+) site.

The protein belongs to the QueC family. Requires Zn(2+) as cofactor.

It carries out the reaction 7-carboxy-7-deazaguanine + NH4(+) + ATP = 7-cyano-7-deazaguanine + ADP + phosphate + H2O + H(+). The protein operates within purine metabolism; 7-cyano-7-deazaguanine biosynthesis. In terms of biological role, catalyzes the ATP-dependent conversion of 7-carboxy-7-deazaguanine (CDG) to 7-cyano-7-deazaguanine (preQ(0)). In Coxiella burnetii (strain RSA 331 / Henzerling II), this protein is 7-cyano-7-deazaguanine synthase.